The primary structure comprises 200 residues: uncharacterized protein (200 aa).

Residues 3–119 (RLFIAEDQRM…DLADAIRKCV (117 aa)) enclose the Response regulatory domain. D54 carries the 4-aspartylphosphate modification. The HTH luxR-type domain occupies 133-198 (MMRDENPLTV…EAASIAEEKG (66 aa)). Residues 157–176 (TKDITLELYLSQGTVRNYIS) constitute a DNA-binding region (H-T-H motif).

In terms of processing, phosphorylated by YvfT.

Its subcellular location is the cytoplasm. Member of the two-component regulatory system YvfT/YvfU. This is an uncharacterized protein from Bacillus subtilis (strain 168).